Reading from the N-terminus, the 485-residue chain is Adenosylhomocysteinase 2 (485 aa).

Residues Thr-64, Asp-139, and Glu-205 each coordinate substrate. An NAD(+)-binding site is contributed by 206–208 (TTT). Substrate-binding residues include Lys-235 and Asp-239. Residues Asn-240, 269–274 (GYGDVG), Glu-292, Asn-327, 348–350 (IGH), and Asn-397 each bind NAD(+).

This sequence belongs to the adenosylhomocysteinase family. NAD(+) serves as cofactor.

The enzyme catalyses S-adenosyl-L-homocysteine + H2O = L-homocysteine + adenosine. The protein operates within amino-acid biosynthesis; L-homocysteine biosynthesis; L-homocysteine from S-adenosyl-L-homocysteine: step 1/1. Functionally, adenosylhomocysteine is a competitive inhibitor of S-adenosyl-L-methionine-dependent methyl transferase reactions; therefore adenosylhomocysteinase may play a key role in the control of methylations via regulation of the intracellular concentration of adenosylhomocysteine. This Arabidopsis thaliana (Mouse-ear cress) protein is Adenosylhomocysteinase 2 (SAHH2).